The chain runs to 387 residues: MKQAVIVDCIRTPMGRSKAGVFRNVRAETLSAELMKGLLLRNPQLDPNTIEDVIWGCVQQTLEQGFNIARNASLLAGIPKTAGAVTVNRLCGSSMEAIHQAARAIMTGMGDTFIIGGVEHMGHVPMNHGVDFHPGLANNVAKASGMMGLTAEMLGKLHGITREQQDAFAVRSHQRAHAATVEGRFAKEIYGIEGHDANGALIKVLHDEVIRPETSMESLAALRPVFDPANGTVTAGTSSALSDGASAMLVMEESKARALGLPIRARIRSMAVAGCDAAIMGYGPVPATQKALARAGITVNDLDVIELNEAFAAQSLPCVKDLGLLDVVDEKINLNGGAIALGHPLGCSGARISTTLINLMEHKDATLGLATMCIGLGQGIATVFERV.

The active-site Acyl-thioester intermediate is C91. Catalysis depends on proton acceptor residues H343 and C373.

It belongs to the thiolase-like superfamily. Thiolase family. In terms of assembly, heterotetramer of two alpha chains (FadB) and two beta chains (FadA).

The protein resides in the cytoplasm. It catalyses the reaction an acyl-CoA + acetyl-CoA = a 3-oxoacyl-CoA + CoA. Its pathway is lipid metabolism; fatty acid beta-oxidation. Its function is as follows. Catalyzes the final step of fatty acid oxidation in which acetyl-CoA is released and the CoA ester of a fatty acid two carbons shorter is formed. The chain is 3-ketoacyl-CoA thiolase from Shewanella sp. (strain MR-4).